Reading from the N-terminus, the 34-residue chain is Photosystem II reaction center protein M (34 aa).

The chain crosses the membrane as a helical span at residues isoleucine 5–isoleucine 25.

The protein belongs to the PsbM family. In terms of assembly, PSII is composed of 1 copy each of membrane proteins PsbA, PsbB, PsbC, PsbD, PsbE, PsbF, PsbH, PsbI, PsbJ, PsbK, PsbL, PsbM, PsbT, PsbX, PsbY, PsbZ, Psb30/Ycf12, at least 3 peripheral proteins of the oxygen-evolving complex and a large number of cofactors. It forms dimeric complexes.

Its subcellular location is the plastid. The protein resides in the chloroplast thylakoid membrane. One of the components of the core complex of photosystem II (PSII). PSII is a light-driven water:plastoquinone oxidoreductase that uses light energy to abstract electrons from H(2)O, generating O(2) and a proton gradient subsequently used for ATP formation. It consists of a core antenna complex that captures photons, and an electron transfer chain that converts photonic excitation into a charge separation. This subunit is found at the monomer-monomer interface. In Welwitschia mirabilis (Tree tumbo), this protein is Photosystem II reaction center protein M.